We begin with the raw amino-acid sequence, 501 residues long: Dipeptide and tripeptide permease A (501 aa).

Residues 1–34 lie on the Cytoplasmic side of the membrane; the sequence is MSTANNNQPESISMNAFKQPKAFYLIFSIELWER. The chain crosses the membrane as a helical span at residues 35–55; it reads FGYYGLQGIMAVYLVKMLGMS. At 56–59 the chain is on the periplasmic side; it reads EADS. The chain crosses the membrane as a helical span at residues 60-80; it reads ITLFSSFSALVYGFVAIGGWL. Residues 81–89 are Cytoplasmic-facing; the sequence is GDKVLGAKR. The next 2 membrane-spanning stretches (helical) occupy residues 90–110 and 111–131; these read VIVL…YSGH and EIFW…LFKA. At 132 to 153 the chain is on the periplasmic side; it reads NPSSLLSTCYSKDDPRLDGAFT. Residues 154–174 form a helical membrane-spanning segment; it reads MYYMSINIGSFFSMLATPWLA. Residues 175 to 178 lie on the Cytoplasmic side of the membrane; it reads AKYG. The chain crosses the membrane as a helical span at residues 179-199; it reads WSVAFSLSVVGMLITLVNFWF. At 200–220 the chain is on the periplasmic side; sequence CRKWVKNQGSKPDFLPLQFKK. The helical transmembrane segment at 221 to 241 threads the bilayer; it reads LLMVLVGIIALITLSNWLLHN. At 242–246 the chain is on the cytoplasmic side; the sequence is QIIAR. The chain crosses the membrane as a helical span at residues 247–267; it reads WALALVSLGIIFIFTKETLFL. Residues 268–274 are Periplasmic-facing; that stretch reads QGIARRR. The helical transmembrane segment at 275 to 295 threads the bilayer; the sequence is MIVAFLLMLEAVIFFVLYSQM. At 296–320 the chain is on the cytoplasmic side; it reads PTSLNFFAIHNVEHSIFGIGFEPEQ. Residues 321-341 traverse the membrane as a helical segment; it reads FQALNPFWIMLASPILAAIYN. Residues 342-352 lie on the Periplasmic side of the membrane; that stretch reads KMGDRLPMPHK. Residues 353 to 373 form a helical membrane-spanning segment; sequence FAFGMMLCSAAFLVLPWGASF. At 374–383 the chain is on the cytoplasmic side; it reads ANEHGIVSVN. Residues 384–404 traverse the membrane as a helical segment; sequence WLILSYALQSIGELMISGLGL. At 405-414 the chain is on the periplasmic side; that stretch reads AMVAQLVPQR. A helical membrane pass occupies residues 415–435; it reads LMGFIMGSWFLTTAAAALIAG. Residues 436 to 460 lie on the Cytoplasmic side of the membrane; it reads KVAALTAVPSDAITDAHASLAIYSH. The helical transmembrane segment at 461–481 threads the bilayer; the sequence is VFMQIGIVTAIIAVLMMLTAP. Over 482-501 the chain is Periplasmic; the sequence is KLYRMTLAPSDHNDVKIMTQ.

The protein belongs to the major facilitator superfamily. Proton-dependent oligopeptide transporter (POT/PTR) (TC 2.A.17) family. DtpA subfamily.

Its subcellular location is the cell inner membrane. In terms of biological role, proton-dependent permease that transports di- and tripeptides. The protein is Dipeptide and tripeptide permease A of Yersinia pestis.